Here is a 306-residue protein sequence, read N- to C-terminus: N-acetylmuramic acid 6-phosphate etherase (306 aa).

In terms of domain architecture, SIS spans 59-222; sequence TAQALGRGGR…STGVMVCLGK (164 aa). Glu87 (proton donor) is an active-site residue. Glu118 is a catalytic residue.

Belongs to the GCKR-like family. MurNAc-6-P etherase subfamily. In terms of assembly, homodimer.

The catalysed reaction is N-acetyl-D-muramate 6-phosphate + H2O = N-acetyl-D-glucosamine 6-phosphate + (R)-lactate. The protein operates within amino-sugar metabolism; N-acetylmuramate degradation. Its function is as follows. Specifically catalyzes the cleavage of the D-lactyl ether substituent of MurNAc 6-phosphate, producing GlcNAc 6-phosphate and D-lactate. This chain is N-acetylmuramic acid 6-phosphate etherase, found in Rippkaea orientalis (strain PCC 8801 / RF-1) (Cyanothece sp. (strain PCC 8801)).